The primary structure comprises 1174 residues: Male determiner protein Mdmd(III) (1174 aa).

Residues 1–15 (MNATDAESRKPENKP) are compositionally biased toward basic and acidic residues. 3 disordered regions span residues 1 to 51 (MNAT…SGQR), 80 to 109 (KDGSNEMLPKEDSINTNHNYTTDSNEHPVE), and 136 to 259 (KQLS…LRRS). Residues 16 to 35 (SSESSSSGSTSGSSDGEVSS) show a composition bias toward low complexity. Polar residues predominate over residues 36 to 47 (KTYFKNNKSKVL). A compositionally biased stretch (basic and acidic residues) spans 80-92 (KDGSNEMLPKEDS). Residues 93 to 102 (INTNHNYTTD) are compositionally biased toward polar residues. Low complexity predominate over residues 138-153 (LSAYRSRSRSTRLSYS). Residues 167-180 (SRYKKSVLRNRRTS) are compositionally biased toward basic residues. Basic and acidic residues predominate over residues 183 to 200 (HGRDSSTTKRSVSRDKDN). Basic residues predominate over residues 201-223 (RLRRRIGSSRSHTRSHSRFRRSE). The segment covering 235–259 (RSQERRHERRRSMSSDYERIALRRS) has biased composition (basic and acidic residues). The MIF4G domain maps to 348–531 (KKYIHGYINK…KVLFQVRRDG (184 aa)). Residues 641–757 (ALRRTIYLTL…SWDVLDCIKL (117 aa)) form the MI domain. Low complexity predominate over residues 840–857 (SAPSSSSSSSLSSELSAP). 2 disordered regions span residues 840-1045 (SAPS…SRTK) and 1096-1133 (KDNYGNRQNHEISQRHDSEIKRRREERKKRHHEKNHSR). Residues 869–909 (KKKHKGKNKKMTKKKNPSKKKEKTKKFVGKNKIAAKNKTIK) are compositionally biased toward basic residues. A compositionally biased stretch (basic and acidic residues) spans 910 to 924 (RRTDKDNSSSKDNFL). The span at 926–957 (SESSSNESISLDSLSSELFAPSSYSSSESSND) shows a compositional bias: low complexity. The span at 963-1001 (KHKGKNKKMTKKKNPSNKKEKTKKKLSKNKKAPNKNTKK) shows a compositional bias: basic residues. A compositionally biased stretch (low complexity) spans 1010-1020 (SSESSISESKS). Basic residues predominate over residues 1034–1045 (RKKRVTSKSRTK). Positions 1103–1118 (QNHEISQRHDSEIKRR) are enriched in basic and acidic residues. Over residues 1119 to 1130 (REERKKRHHEKN) the composition is skewed to basic residues.

Belongs to the CWC22 family. Component of the spliceosome C complex.

It is found in the nucleus speckle. Its function is as follows. Male determiner protein (M-factor) that controls male somatic sexual differentiation. Acts as a dominant factor that regulates the mRNA splicing of transformer (tra) and doublesex (dsx) transcripts and promotes expression of male splice forms of tra and dsx. Probably acts as a component of the spliceosome C complex required for mRNA splicing factor and exon-junction complex (EJC) assembly. Hinders eIF4AIII from non-specifically binding RNA and escorts it to the splicing machinery to promote EJC assembly on mature mRNAs. The polypeptide is Male determiner protein Mdmd(III) (Musca domestica (House fly)).